A 240-amino-acid chain; its full sequence is MQDKDFFSWRRTMLLRFQRMETAEEVYHEIELQAQQLEYDYYSLCVRHPVPFTRPKVAFYTNYPEAWVSYYQAKNFLAIDPVLNPENFSQGHLMWNDDLFSEAQPLWEAARAHGLRRGVTQYLMLPNRALGFLSFSRCSAREIPILSDELQLKMQLLVRESLMALMRLNDEIVMTPEMNFSKREKEILRWTAEGKTSAEIAMILSISENTVNFHQKNMQKKINAPNKTQVACYAAATGLI.

Residues 173 to 238 (VMTPEMNFSK…QVACYAAATG (66 aa)) enclose the HTH luxR-type domain. The H-T-H motif DNA-binding region spans 197-216 (SAEIAMILSISENTVNFHQK).

Functionally, activates cell division by specifically increasing transcription from one of the two promoters that lie immediately upstream of the ftsQAZ gene cluster. Activates ydiV expression in response to extracellular autoinducer AI-1 (Vibrio fischeri autoinducer oxoC6). The polypeptide is Regulatory protein SdiA (sdiA) (Escherichia coli (strain K12)).